The primary structure comprises 469 residues: Glutamine synthetase (469 aa).

A GS beta-grasp domain is found at 14–99 (NDVKFVDLRF…VCDILDPVSG (86 aa)). One can recognise a GS catalytic domain in the interval 106–469 (RRGTAKKAEA…PVEYDMYYSA (364 aa)). Residues E131 and E133 each coordinate Mg(2+). Residue E209 coordinates ATP. E214 and D221 together coordinate Mg(2+). L-glutamate-binding positions include 265 to 266 (NG) and G266. H270 is a binding site for Mg(2+). ATP-binding positions include 272–274 (HQS) and S274. Residues R322, E328, and R340 each coordinate L-glutamate. ATP is bound by residues R340, R345, and K353. E358 is a Mg(2+) binding site. L-glutamate is bound at residue R360. Y398 is modified (O-AMP-tyrosine).

Belongs to the glutamine synthetase family. In terms of assembly, oligomer of 12 subunits arranged in the form of two hexameric ring. Requires Mg(2+) as cofactor.

The protein resides in the cytoplasm. The enzyme catalyses L-glutamate + NH4(+) + ATP = L-glutamine + ADP + phosphate + H(+). With respect to regulation, the activity of this enzyme could be controlled by adenylation under conditions of abundant glutamine. Functionally, catalyzes the ATP-dependent biosynthesis of glutamine from glutamate and ammonia. The polypeptide is Glutamine synthetase (Rhizobium leguminosarum bv. viciae).